Reading from the N-terminus, the 774-residue chain is 5-methyltetrahydropteroyltriglutamate--homocysteine methyltransferase (774 aa).

5-methyltetrahydropteroyltri-L-glutamate contacts are provided by residues 15–18 and Lys116; that span reads RELK. L-homocysteine is bound by residues 445 to 447 and Glu498; that span reads IGS. L-methionine-binding positions include 445–447 and Glu498; that span reads IGS. 5-methyltetrahydropteroyltri-L-glutamate-binding positions include 529 to 530 and Trp575; that span reads RC. An L-homocysteine-binding site is contributed by Asp613. Asp613 serves as a coordination point for L-methionine. Position 619 (Glu619) interacts with 5-methyltetrahydropteroyltri-L-glutamate. The Zn(2+) site is built by His655, Cys657, and Glu679. The Proton donor role is filled by His708. Cys740 contributes to the Zn(2+) binding site.

Belongs to the vitamin-B12 independent methionine synthase family. It depends on Zn(2+) as a cofactor.

The catalysed reaction is 5-methyltetrahydropteroyltri-L-glutamate + L-homocysteine = tetrahydropteroyltri-L-glutamate + L-methionine. The protein operates within amino-acid biosynthesis; L-methionine biosynthesis via de novo pathway; L-methionine from L-homocysteine (MetE route): step 1/1. Catalyzes the transfer of a methyl group from 5-methyltetrahydrofolate to homocysteine resulting in methionine formation. In Flavobacterium johnsoniae (strain ATCC 17061 / DSM 2064 / JCM 8514 / BCRC 14874 / CCUG 350202 / NBRC 14942 / NCIMB 11054 / UW101) (Cytophaga johnsonae), this protein is 5-methyltetrahydropteroyltriglutamate--homocysteine methyltransferase.